The chain runs to 124 residues: MIGIDIVSISRISKIYTKFGDKFLDKILSGNEQNSVLNLNYNLKLERLAGIYAAKEAFAKALGVGISADFGFLDVEILKNDRGAPFLEIAPCIIKKFNIKNADVSITHDGGFAISAVILEMSKF.

D5 and E56 together coordinate Mg(2+).

The protein belongs to the P-Pant transferase superfamily. AcpS family. Mg(2+) is required as a cofactor.

The protein localises to the cytoplasm. It carries out the reaction apo-[ACP] + CoA = holo-[ACP] + adenosine 3',5'-bisphosphate + H(+). Functionally, transfers the 4'-phosphopantetheine moiety from coenzyme A to a Ser of acyl-carrier-protein. This is Holo-[acyl-carrier-protein] synthase from Campylobacter hominis (strain ATCC BAA-381 / DSM 21671 / CCUG 45161 / LMG 19568 / NCTC 13146 / CH001A).